A 179-amino-acid chain; its full sequence is ATP synthase subunit delta (179 aa).

Belongs to the ATPase delta chain family. In terms of assembly, F-type ATPases have 2 components, F(1) - the catalytic core - and F(0) - the membrane proton channel. F(1) has five subunits: alpha(3), beta(3), gamma(1), delta(1), epsilon(1). F(0) has three main subunits: a(1), b(2) and c(10-14). The alpha and beta chains form an alternating ring which encloses part of the gamma chain. F(1) is attached to F(0) by a central stalk formed by the gamma and epsilon chains, while a peripheral stalk is formed by the delta and b chains.

The protein localises to the cell membrane. Functionally, f(1)F(0) ATP synthase produces ATP from ADP in the presence of a proton or sodium gradient. F-type ATPases consist of two structural domains, F(1) containing the extramembraneous catalytic core and F(0) containing the membrane proton channel, linked together by a central stalk and a peripheral stalk. During catalysis, ATP synthesis in the catalytic domain of F(1) is coupled via a rotary mechanism of the central stalk subunits to proton translocation. This protein is part of the stalk that links CF(0) to CF(1). It either transmits conformational changes from CF(0) to CF(1) or is implicated in proton conduction. The chain is ATP synthase subunit delta from Staphylococcus aureus (strain USA300 / TCH1516).